Here is a 207-residue protein sequence, read N- to C-terminus: Large ribosomal subunit protein uL4 (207 aa).

Positions 45-89 (RQGTHKVKTRSEVRGGGRKPWRQKGTGRARQGSIRSPQWRGGGTV) are disordered. The segment covering 60–71 (GGRKPWRQKGTG) has biased composition (basic residues).

The protein belongs to the universal ribosomal protein uL4 family. Part of the 50S ribosomal subunit.

One of the primary rRNA binding proteins, this protein initially binds near the 5'-end of the 23S rRNA. It is important during the early stages of 50S assembly. It makes multiple contacts with different domains of the 23S rRNA in the assembled 50S subunit and ribosome. Its function is as follows. Forms part of the polypeptide exit tunnel. The sequence is that of Large ribosomal subunit protein uL4 from Bacillus mycoides (strain KBAB4) (Bacillus weihenstephanensis).